A 381-amino-acid polypeptide reads, in one-letter code: Cytochrome b (381 aa).

Transmembrane regions (helical) follow at residues 34–54 (FGSL…FLAM), 78–99 (WLIR…YLHI), 114–134 (WNIG…GYVL), and 179–199 (FFAF…IHLL). Heme b contacts are provided by H84 and H98. Positions 183 and 197 each coordinate heme b. A ubiquinone is bound at residue H202. A run of 4 helical transmembrane segments spans residues 227 to 247 (YKDL…ALFL), 289 to 309 (LGGV…PMLH), 321 to 341 (MTQF…WIGG), and 348 to 368 (FILV…IIIP).

The protein belongs to the cytochrome b family. The cytochrome bc1 complex contains 3 respiratory subunits (MT-CYB, CYC1 and UQCRFS1), 2 core proteins (UQCRC1 and UQCRC2) and probably 6 low-molecular weight proteins. Heme b is required as a cofactor.

It is found in the mitochondrion inner membrane. Functionally, component of the ubiquinol-cytochrome c reductase complex (complex III or cytochrome b-c1 complex) that is part of the mitochondrial respiratory chain. The b-c1 complex mediates electron transfer from ubiquinol to cytochrome c. Contributes to the generation of a proton gradient across the mitochondrial membrane that is then used for ATP synthesis. This Squalus acanthias (Spiny dogfish) protein is Cytochrome b (mt-cyb).